Reading from the N-terminus, the 322-residue chain is Lipoyl synthase (322 aa).

Positions 1 to 25 (MSQRITIDHRSAPALRHPEKAHRPD) are enriched in basic and acidic residues. The disordered stretch occupies residues 1 to 29 (MSQRITIDHRSAPALRHPEKAHRPDNPIQ). The [4Fe-4S] cluster site is built by C61, C66, C72, C87, C91, C94, and S300. The Radical SAM core domain maps to 73–289 (WSQRHATMMI…AAAARSKGFL (217 aa)).

This sequence belongs to the radical SAM superfamily. Lipoyl synthase family. Requires [4Fe-4S] cluster as cofactor.

The protein resides in the cytoplasm. It catalyses the reaction [[Fe-S] cluster scaffold protein carrying a second [4Fe-4S](2+) cluster] + N(6)-octanoyl-L-lysyl-[protein] + 2 oxidized [2Fe-2S]-[ferredoxin] + 2 S-adenosyl-L-methionine + 4 H(+) = [[Fe-S] cluster scaffold protein] + N(6)-[(R)-dihydrolipoyl]-L-lysyl-[protein] + 4 Fe(3+) + 2 hydrogen sulfide + 2 5'-deoxyadenosine + 2 L-methionine + 2 reduced [2Fe-2S]-[ferredoxin]. It functions in the pathway protein modification; protein lipoylation via endogenous pathway; protein N(6)-(lipoyl)lysine from octanoyl-[acyl-carrier-protein]: step 2/2. Catalyzes the radical-mediated insertion of two sulfur atoms into the C-6 and C-8 positions of the octanoyl moiety bound to the lipoyl domains of lipoate-dependent enzymes, thereby converting the octanoylated domains into lipoylated derivatives. This chain is Lipoyl synthase, found in Gluconobacter oxydans (strain 621H) (Gluconobacter suboxydans).